The following is a 114-amino-acid chain: U17-barytoxin-Tl1d (114 aa).

The first 20 residues, 1 to 20 (MKTIIVFLSLLVLATKFGDA), serve as a signal peptide directing secretion. The propeptide occupies 21 to 74 (NEGVNQEQMKEVIQNEFREDFLNEMAAMSLLQQLEAIESTLLEKEADRNSRQKR). 3 cysteine pairs are disulfide-bonded: cysteine 75/cysteine 88, cysteine 82/cysteine 93, and cysteine 87/cysteine 108.

This sequence belongs to the neurotoxin 14 (magi-1) family. 03 (ICK-30-40) subfamily. In terms of tissue distribution, expressed by the venom gland.

Its subcellular location is the secreted. In terms of biological role, ion channel inhibitor. This is U17-barytoxin-Tl1d from Trittame loki (Brush-footed trapdoor spider).